A 313-amino-acid polypeptide reads, in one-letter code: Competence protein ComGA (313 aa).

Residue 138–145 participates in ATP binding; sequence GPVGSGKT.

Belongs to the GSP E family.

It is found in the cell membrane. In terms of biological role, required for uptake of DNA by competent cells. May be involved in assembly of a complex forming a transformation pilus at the surface of competent cells. This Streptococcus pneumoniae (strain ATCC BAA-255 / R6) protein is Competence protein ComGA.